Reading from the N-terminus, the 327-residue chain is MVVELKNIEKIYENGFHALKGVNLELKKGDILGVIGYSGAGKSTLIRLINCLERPSSGEVLVNGVNLLNLKPKELQKARQKIGMIFQHFNLLSAKNVFENVAFALEIARWEKNKIKSRVHELLELVGLEDKMHFYPKQLSGGQKQRVAIARSLANCPDLLLCDEATSALDSKTTHSILTLLSGIQKKLDLSIVFITHEIEVVKELCNQMCVISSGEIVERGLVEEIFANPKHAVTKELLGIKNEHGDQKCQDVYRIVFLGEHLDEPIISNLIRRFKIDVSIISGNIEELTTKDIGYLVVRFLGSTTETQRALEYLNALGLQVEKLKD.

In terms of domain architecture, ABC transporter spans 3–239; sequence VELKNIEKIY…PKHAVTKELL (237 aa). 36–43 is a binding site for ATP; that stretch reads GYSGAGKS.

Belongs to the ABC transporter superfamily. Methionine importer (TC 3.A.1.24) family. As to quaternary structure, the complex is composed of two ATP-binding proteins (MetN), two transmembrane proteins (MetI) and a solute-binding protein (MetQ).

The protein localises to the cell inner membrane. The catalysed reaction is L-methionine(out) + ATP + H2O = L-methionine(in) + ADP + phosphate + H(+). The enzyme catalyses D-methionine(out) + ATP + H2O = D-methionine(in) + ADP + phosphate + H(+). Functionally, part of the ABC transporter complex MetNIQ involved in methionine import. Responsible for energy coupling to the transport system. The sequence is that of Methionine import ATP-binding protein MetN from Helicobacter pylori (strain HPAG1).